We begin with the raw amino-acid sequence, 658 residues long: ATP-dependent RNA helicase DDX3Y (658 aa).

The interval 1 to 143 (MSQVAAESTA…DWSKPLPPSE (143 aa)) is disordered. Ser-2 is subject to N-acetylserine. Basic and acidic residues predominate over residues 45–69 (RNRETSKGVCDKDSSGWSCSKDKDA). Lys-56 carries the N6-acetyllysine modification. Phosphoserine is present on residues Ser-86 and Ser-90. Positions 94–129 (GRFDDHGRNDYDGIGGRDRTGFGKFERSGHSRWSDR) are enriched in basic and acidic residues. Arg-101 is modified (omega-N-methylarginine). Residue Tyr-104 is modified to Phosphotyrosine. Arg-110 bears the Omega-N-methylarginine mark. The residue at position 117 (Lys-117) is an N6-acetyllysine. 2 positions are modified to phosphoserine: Ser-130 and Ser-182. The short motif at 179-207 (ENFSDIEMGEIIMGNIELTRYTRPTPVQK) is the Q motif element. 199–206 (YTRPTPVQ) lines the ATP pocket. The 193-residue stretch at 210 to 402 (IPIIKEKRDL…RDFLDEYIFL (193 aa)) folds into the Helicase ATP-binding domain. Residue Lys-214 forms a Glycyl lysine isopeptide (Lys-Gly) (interchain with G-Cter in SUMO2) linkage. 223 to 230 (AQTGSGKT) is a binding site for ATP. A DEAD box motif is present at residues 346–349 (DEAD). Residues 413-574 (NITQKVVWVE…EVPSWLESMA (162 aa)) form the Helicase C-terminal domain. Ser-455 bears the Phosphoserine mark. Arg-590 carries the post-translational modification Omega-N-methylarginine. Phosphoserine occurs at positions 592 and 603. Residues 597–627 (ARDYRQSSGSANAGFNSNRANSSRSSGSSHN) form a disordered region. The segment covering 603-627 (SSGSANAGFNSNRANSSRSSGSSHN) has biased composition (low complexity). 2 positions are modified to omega-N-methylarginine: Arg-615 and Arg-628.

The protein belongs to the DEAD box helicase family. DDX3/DED1 subfamily. In terms of tissue distribution, found in heart, brain, liver, skeletal muscle, kidney and testis. Low expression detected in lung. In testis, expressed in all types of spermatogenic cells including spermatogonia, spermatocytes, spermatids and somatic Sertoli cells within the seminiferous tubules. Also expressed in Leydig cells and other interstitial cells.

Its subcellular location is the cytoplasm. It is found in the nucleus. The enzyme catalyses ATP + H2O = ADP + phosphate + H(+). In terms of biological role, probable ATP-dependent RNA helicase. During immune response, may enhance IFNB1 expression via IRF3/IRF7 pathway. The chain is ATP-dependent RNA helicase DDX3Y (Ddx3y) from Mus musculus (Mouse).